The following is a 606-amino-acid chain: Mitogen-activated protein kinase kinase kinase 7 (606 aa).

Residues 1–300 form an interaction with MAPK8IP1 region; it reads MSTASAASSS…FPGADEPLQY (300 aa). The Protein kinase domain occupies 36–291; that stretch reads IEVEEVVGRG…KIMTHLMRYF (256 aa). ATP contacts are provided by residues 42 to 50 and K63; that span reads VGRGAFGVV. A Glycyl lysine isopeptide (Lys-Gly) (interchain with G-Cter in ubiquitin) cross-link involves residue K72. The active-site Proton acceptor is the D156. K158 participates in a covalent cross-link: Glycyl lysine isopeptide (Lys-Gly) (interchain with G-Cter in ubiquitin). T184 and T187 each carry phosphothreonine; by autocatalysis. Residue S192 is modified to Phosphoserine; by autocatalysis. K209 is covalently cross-linked (Glycyl lysine isopeptide (Lys-Gly) (interchain with G-Cter in ubiquitin)). 2 disordered regions span residues 301-338 and 354-391; these read PCQY…MEQV and KNQA…MSAD. The segment covering 306–338 has biased composition (polar residues); the sequence is DEGQSNSATSTGSFMDIASTNTSNKSDTNMEQV. The span at 361-375 shows a compositional bias: low complexity; it reads SDSGRLSLGASRGSS. Phosphoserine occurs at positions 367, 389, and 439. Residues 443 to 452 are compositionally biased toward polar residues; sequence LTVTGTEPGQ. The interval 443 to 492 is disordered; the sequence is LTVTGTEPGQVSSRSSSPSVRMITTSGPTSEKPARSLPWTPDDSTDTNGS. Positions 453–463 are enriched in low complexity; the sequence is VSSRSSSPSVR. A Phosphoserine modification is found at S455.

This sequence belongs to the protein kinase superfamily. STE Ser/Thr protein kinase family. MAP kinase kinase kinase subfamily. In terms of assembly, can form homodimer. Binds both upstream activators and downstream substrates in multimolecular complexes. Interacts with TAB1/MAP3K7IP1, TAB2/MAP3K7IP2 and TAB3/MAP3K7IP3. Identified in the TRIKA2 complex composed of MAP3K7/TAK1, TAB1/MAP3K7IP1 and TAB2/MAP3K7IP2. Interacts with PPM1L and PPM1B/PP2CB. Interaction with PP2A and PPP6C leads to its repressed activity. Interacts with TRAF6 and TAB1/MAP3K7IP1; during IL-1 signaling. Interacts with TAOK1 and TAOK2; interaction with TAOK2 interferes with MAP3K7 interaction with IKKA, thus preventing NF-kappa-B activation. Interacts with DYNC2I2 (via WD domains). Interacts with CYLD and RBCK1. Interacts with TGFBR1; induces MAP3K7/TAK1 activation by TRAF6. Interacts with MAPK8IP1 and SMAD6. Interacts with isoform 1 of VRK2. Interacts with DAB2; the interaction is induced by TGF-beta stimulation and may mediate TGF-beta stimulated JNK activation. Interacts with TRIM5. Part of a complex containing ITCH, NDFIP1 and MAP3K7. Interacts with PLEKHM1 (via N- and C-terminus). Found in a complex with SH3RF1, RAC2, MAP2K7/MKK7, MAPK8IP1/JIP1, MAPK8/JNK1 and MAPK9/JNK2. Interacts with SASH1. Interacts with RIPK1. Mg(2+) is required as a cofactor. Post-translationally, association with TAB1/MAP3K7IP1 promotes autophosphorylation at Ser-192 and subsequent activation. Association with TAB2/MAP3K7IP2, itself associated with free unanchored Lys-63 polyubiquitin chain, promotes autophosphorylation and subsequent activation of MAP3K7. Dephosphorylation at Ser-192 by PPM1B/PP2CB and at Thr-187 by PP2A and PPP6C leads to inactivation. Deubiquitinated by USP19; leading to negative regulation of TNF-alpha- and IL-1beta-triggered NF-kappa-B activation. In terms of processing, 'Lys-48'-linked polyubiquitination at Lys-72 is induced by TNFalpha, and leads to proteasomal degradation. Undergoes 'Lys-48'-linked polyubiquitination catalyzed by ITCH. 'Lys-63'-linked polyubiquitination at Lys-158 by TRIM8 does not lead to proteasomal degradation but contributes to autophosphorylation and activation. Deubiquitinated by CYLD, a protease that selectively cleaves 'Lys-63'-linked ubiquitin chains.

The protein localises to the cytoplasm. It localises to the cell membrane. The enzyme catalyses L-seryl-[protein] + ATP = O-phospho-L-seryl-[protein] + ADP + H(+). It catalyses the reaction L-threonyl-[protein] + ATP = O-phospho-L-threonyl-[protein] + ADP + H(+). With respect to regulation, activated by pro-inflammatory cytokines and in response to physical and chemical stresses, including osmotic stress, oxidative stress, arsenic and ultraviolet light irradiation. Activated by 'Lys-63'-linked polyubiquitination and by autophosphorylation. Association with TAB1/MAP3K7IP1 and TAB2/MAP3K7IP2 promotes activation through autophosphorylation, whereas PPM1B/PP2CB, PP2A and PPP6C dephosphorylation leads to inactivation. Ceramides are also able to activate MAP3K7/TAK1. Functionally, serine/threonine kinase which acts as an essential component of the MAP kinase signal transduction pathway. Plays an important role in the cascades of cellular responses evoked by changes in the environment. Mediates signal transduction of TRAF6, various cytokines including interleukin-1 (IL-1), transforming growth factor-beta (TGFB), TGFB-related factors like BMP2 and BMP4, toll-like receptors (TLR), tumor necrosis factor receptor CD40 and B-cell receptor (BCR). Once activated, acts as an upstream activator of the MKK/JNK signal transduction cascade and the p38 MAPK signal transduction cascade through the phosphorylation and activation of several MAP kinase kinases like MAP2K1/MEK1, MAP2K3/MKK3, MAP2K6/MKK6 and MAP2K7/MKK7. These MAP2Ks in turn activate p38 MAPKs and c-jun N-terminal kinases (JNKs); both p38 MAPK and JNK pathways control the transcription factors activator protein-1 (AP-1). Independently of MAP2Ks and p38 MAPKs, acts as a key activator of NF-kappa-B by promoting activation of the I-kappa-B-kinase (IKK) core complex. Mechanistically, recruited to polyubiquitin chains of RIPK2 and IKBKG/NEMO via TAB2/MAP3K7IP2 and TAB3/MAP3K7IP3, and catalyzes phosphorylation and activation of IKBKB/IKKB component of the IKK complex, leading to NF-kappa-B activation. In osmotic stress signaling, plays a major role in the activation of MAPK8/JNK1, but not that of NF-kappa-B. Promotes TRIM5 capsid-specific restriction activity. Phosphorylates RIPK1 at 'Ser-321' which positively regulates RIPK1 interaction with RIPK3 to promote necroptosis but negatively regulates RIPK1 kinase activity and its interaction with FADD to mediate apoptosis. Phosphorylates STING1 in response to cGAMP-activation, promoting association between STEEP1 and STING1 and STING1 translocation to COPII vesicles. The sequence is that of Mitogen-activated protein kinase kinase kinase 7 (Map3k7) from Rattus norvegicus (Rat).